The sequence spans 801 residues: U-box domain-containing protein 34 (801 aa).

The disordered stretch occupies residues 205-309; that stretch reads RSPTLPDPRQ…PETSRKSKKV (105 aa). The span at 236–254 shows a compositional bias: polar residues; it reads LTCNKPKTPQSSKASSATT. A compositionally biased stretch (basic and acidic residues) spans 289-309; sequence VSEHRDSDRSPPETSRKSKKV. Residues 301–395 are a coiled coil; the sequence is ETSRKSKKVE…ETAKALLARE (95 aa). A Protein kinase domain is found at 442-705; that stretch reads FSPEKVIGEG…DLKSEVIPVL (264 aa). ATP contacts are provided by residues 448–456 and Lys469; that span reads IGEGGYGKV. Catalysis depends on Asp564, which acts as the Proton acceptor. Positions 724-797 constitute a U-box domain; sequence RAPSHYFCPI…RDWKSRVRFS (74 aa).

This sequence belongs to the protein kinase superfamily. Ser/Thr protein kinase family.

It catalyses the reaction L-seryl-[protein] + ATP = O-phospho-L-seryl-[protein] + ADP + H(+). The enzyme catalyses L-threonyl-[protein] + ATP = O-phospho-L-threonyl-[protein] + ADP + H(+). The catalysed reaction is S-ubiquitinyl-[E2 ubiquitin-conjugating enzyme]-L-cysteine + [acceptor protein]-L-lysine = [E2 ubiquitin-conjugating enzyme]-L-cysteine + N(6)-ubiquitinyl-[acceptor protein]-L-lysine.. It participates in protein modification; protein ubiquitination. Functionally, functions as an E3 ubiquitin ligase. The sequence is that of U-box domain-containing protein 34 (PUB34) from Arabidopsis thaliana (Mouse-ear cress).